Here is a 321-residue protein sequence, read N- to C-terminus: Phosphate metabolism protein 8 (321 aa).

This sequence belongs to the SSM1 family.

Its function is as follows. May be involved in phosphate metabolism. The chain is Phosphate metabolism protein 8 (PHM8) from Saccharomyces cerevisiae (strain ATCC 204508 / S288c) (Baker's yeast).